Consider the following 61-residue polypeptide: uncharacterized protein (61 aa).

Positions 1-40 are disordered; sequence MRRGGEPQCDGREFRIASSPAREREDDNETAPPQTSAAQE. The span at 9–25 shows a compositional bias: basic and acidic residues; the sequence is CDGREFRIASSPARERE.

This is an uncharacterized protein from Caenorhabditis elegans.